A 154-amino-acid chain; its full sequence is 3-hydroxyacyl-[acyl-carrier-protein] dehydratase FabZ (154 aa).

The active site involves histidine 54.

Belongs to the thioester dehydratase family. FabZ subfamily.

It is found in the cytoplasm. It catalyses the reaction a (3R)-hydroxyacyl-[ACP] = a (2E)-enoyl-[ACP] + H2O. In terms of biological role, involved in unsaturated fatty acids biosynthesis. Catalyzes the dehydration of short chain beta-hydroxyacyl-ACPs and long chain saturated and unsaturated beta-hydroxyacyl-ACPs. The sequence is that of 3-hydroxyacyl-[acyl-carrier-protein] dehydratase FabZ from Shewanella baltica (strain OS223).